The chain runs to 172 residues: Acetolactate synthase small subunit (172 aa).

Residues 4–79 (IITLTVVNRS…DVLKVTDITN (76 aa)) enclose the ACT domain.

It belongs to the acetolactate synthase small subunit family. As to quaternary structure, dimer of large and small chains.

It carries out the reaction 2 pyruvate + H(+) = (2S)-2-acetolactate + CO2. The protein operates within amino-acid biosynthesis; L-isoleucine biosynthesis; L-isoleucine from 2-oxobutanoate: step 1/4. It participates in amino-acid biosynthesis; L-valine biosynthesis; L-valine from pyruvate: step 1/4. The polypeptide is Acetolactate synthase small subunit (ilvH) (Bacillus subtilis (strain 168)).